The following is a 548-amino-acid chain: Solute carrier family 22 member 7 (548 aa).

12 consecutive transmembrane segments (helical) span residues 21–41 (VALL…PIFL), 146–166 (AAST…GYLS), 180–200 (VSTL…MFAI), 204–224 (LTGS…LEWL), 234–254 (VLSS…GYLI), 259–279 (WLLL…WWVP), 346–366 (ISLC…GLSL), 376–397 (YQTQ…YLSV), 404–423 (LTQA…RLLV), 432–452 (TVLA…AYLF), 466–486 (MGLT…AALL), and 493–513 (LPKL…LLLP). The interval 522–548 (ETIQDVERKSAPTSLQEEEMPMKQVQN) is disordered.

It belongs to the major facilitator (TC 2.A.1) superfamily. Organic cation transporter (TC 2.A.1.19) family.

It is found in the basolateral cell membrane. It localises to the apical cell membrane. The protein localises to the cell membrane. It catalyses the reaction orotate(out) + L-glutamate(in) = orotate(in) + L-glutamate(out). The enzyme catalyses 3',5'-cyclic GMP(in) = 3',5'-cyclic GMP(out). The catalysed reaction is GMP(in) = GMP(out). It carries out the reaction 2'-deoxyguanosine(in) = 2'-deoxyguanosine(out). It catalyses the reaction GDP(in) = GDP(out). The enzyme catalyses guanosine(in) = guanosine(out). The catalysed reaction is GTP(in) = GTP(out). It carries out the reaction 3',5'-cyclic AMP(in) = 3',5'-cyclic AMP(out). It catalyses the reaction creatinine(in) = creatinine(out). The enzyme catalyses prostaglandin E2(out) = prostaglandin E2(in). The catalysed reaction is 2-oxoglutarate(in) = 2-oxoglutarate(out). It carries out the reaction glutarate(in) = glutarate(out). It catalyses the reaction urate(out) = urate(in). The enzyme catalyses estrone 3-sulfate(out) = estrone 3-sulfate(in). In terms of biological role, functions as a Na(+)-independent bidirectional multispecific transporter. Contributes to the renal and hepatic elimination of endogenous organic compounds from the systemic circulation into the urine and bile, respectively. Capable of transporting a wide range of purine and pyrimidine nucleobases, nucleosides and nucleotides, with cGMP, 2'deoxyguanosine and GMP being the preferred substrates. Functions as a pH- and chloride-independent cGMP bidirectional facilitative transporter that can regulate both intracellular and extracellular levels of cGMP and may be involved in cGMP signaling pathways. Mediates orotate/glutamate bidirectional exchange and most likely display a physiological role in hepatic release of glutamate into the blood. Involved in renal secretion and possible reabsorption of creatinine. Able to uptake prostaglandin E2 (PGE2) and may contribute to PGE2 renal excretion. Also transports alpha-ketoglutarate and urate. Apart from the orotate/glutamate exchange, the counterions for the uptake of other SLC22A7/OAT2 substrates remain to be identified. The sequence is that of Solute carrier family 22 member 7 (SLC22A7) from Pongo abelii (Sumatran orangutan).